The sequence spans 915 residues: Protein inturned (915 aa).

A disordered region spans residues 88 to 144 (NAKRQANSSNKSEAKLKKLTKILRRKRRPSQRKAEGKDSSQRPASILKNQAGQRPGV). Residues 104-118 (KKLTKILRRKRRPSQ) show a composition bias toward basic residues. The span at 128 to 139 (QRPASILKNQAG) shows a compositional bias: polar residues. The PDZ domain occupies 165–253 (SVSSSSADRG…PMQVRLTLET (89 aa)). The tract at residues 688–738 (GIRGRRASPQRSQSDSGSEGHADGTPASVARRDSLGSGGSDGSLGSAGFLK) is disordered.

Belongs to the inturned family.

The protein localises to the cytoplasm. It is found in the cell surface. Its subcellular location is the cytoskeleton. The protein resides in the cilium basal body. Plays a key role in ciliogenesis and embryonic development. Regulator of cilia formation by controlling the organization of the apical actin cytoskeleton and the positioning of the basal bodies at the apical cell surface, which in turn is essential for the normal orientation of elongating ciliary microtubules. Plays a key role in definition of cell polarity via its role in ciliogenesis but not via conversion extension. Has an indirect effect on hedgehog signaling. The polypeptide is Protein inturned (intu) (Danio rerio (Zebrafish)).